The sequence spans 361 residues: D-alanine--D-alanine ligase (361 aa).

In terms of domain architecture, ATP-grasp spans 149-353 (KKLMAAEGLP…YEELLDVLVQ (205 aa)). Residue 176–231 (KKLLGLPVFVKPARGGSSIGISKVSRWEDLPAAVDLARQHDEKVIVESEIVGPEVE) coordinates ATP. Positions 308, 320, and 322 each coordinate Mg(2+).

This sequence belongs to the D-alanine--D-alanine ligase family. Mg(2+) is required as a cofactor. Mn(2+) serves as cofactor.

It localises to the cytoplasm. The catalysed reaction is 2 D-alanine + ATP = D-alanyl-D-alanine + ADP + phosphate + H(+). It participates in cell wall biogenesis; peptidoglycan biosynthesis. Functionally, cell wall formation. The chain is D-alanine--D-alanine ligase from Corynebacterium efficiens (strain DSM 44549 / YS-314 / AJ 12310 / JCM 11189 / NBRC 100395).